The chain runs to 210 residues: Secreted effector protein SteA (210 aa).

It is found in the secreted. Its subcellular location is the host cytoplasm. Functionally, effector proteins function to alter host cell physiology and promote bacterial survival in host tissues. Could be required for passage of bacteria from the peritoneal cavity into the spleen, for survival and replication within host cells, or for avoiding host immune response. This chain is Secreted effector protein SteA (steA), found in Salmonella typhimurium (strain 14028s / SGSC 2262).